The following is a 232-amino-acid chain: Chalcone--flavanone isomerase (232 aa).

Substrate-binding residues include Thr50 and Ser192.

This sequence belongs to the chalcone isomerase family.

The enzyme catalyses a chalcone = a flavanone.. Its pathway is secondary metabolite biosynthesis; flavonoid biosynthesis. In terms of biological role, catalyzes the intramolecular cyclization of bicyclic chalcones into tricyclic (S)-flavanones. Responsible for the isomerization of 4,2',4',6'-tetrahydroxychalcone (also termed chalcone) into naringenin. This chain is Chalcone--flavanone isomerase (CHI), found in Saussurea medusa (Saw-wort).